We begin with the raw amino-acid sequence, 166 residues long: Small ribosomal subunit protein uS5 (166 aa).

The S5 DRBM domain maps to Leu-11–Val-74.

The protein belongs to the universal ribosomal protein uS5 family. In terms of assembly, part of the 30S ribosomal subunit. Contacts proteins S4 and S8.

Its function is as follows. With S4 and S12 plays an important role in translational accuracy. Functionally, located at the back of the 30S subunit body where it stabilizes the conformation of the head with respect to the body. This is Small ribosomal subunit protein uS5 from Mannheimia succiniciproducens (strain KCTC 0769BP / MBEL55E).